Reading from the N-terminus, the 316-residue chain is HPr kinase/phosphorylase (316 aa).

Catalysis depends on residues His143 and Lys164. 158–165 (GEAGSGKS) contacts ATP. Ser165 is a Mg(2+) binding site. The Proton acceptor; for phosphorylation activity. Proton donor; for dephosphorylation activity role is filled by Asp182. Residues 206-215 (LEVRGLGVLN) form an important for the catalytic mechanism of both phosphorylation and dephosphorylation region. Glu207 contributes to the Mg(2+) binding site. Residue Arg251 is part of the active site. Positions 272–277 (PVMPGR) are important for the catalytic mechanism of dephosphorylation.

Belongs to the HPrK/P family. In terms of assembly, homohexamer. The cofactor is Mg(2+).

The enzyme catalyses [HPr protein]-L-serine + ATP = [HPr protein]-O-phospho-L-serine + ADP + H(+). It catalyses the reaction [HPr protein]-O-phospho-L-serine + phosphate + H(+) = [HPr protein]-L-serine + diphosphate. Its function is as follows. Catalyzes the ATP- as well as the pyrophosphate-dependent phosphorylation of a specific serine residue in HPr, a phosphocarrier protein of the phosphoenolpyruvate-dependent sugar phosphotransferase system (PTS). HprK/P also catalyzes the pyrophosphate-producing, inorganic phosphate-dependent dephosphorylation (phosphorolysis) of seryl-phosphorylated HPr (P-Ser-HPr). This Xanthomonas oryzae pv. oryzae (strain MAFF 311018) protein is HPr kinase/phosphorylase.